The following is a 504-amino-acid chain: Dimethylsulfoniopropionate lyase 5 (504 aa).

It belongs to the aspartate/glutamate racemases family. ALMA1 subfamily. Homotetramer.

The enzyme catalyses S,S-dimethyl-beta-propiothetin = acrylate + dimethyl sulfide + H(+). Its function is as follows. Mediates cleavage of dimethylsulfoniopropionate (DMSP) into dimethyl sulfide (DMS) and acrylate. DMS is the principal form by which sulfur is transported from oceans to the atmosphere and is a key component of the ocean sulfur cycle. This is Dimethylsulfoniopropionate lyase 5 from Emiliania huxleyi (strain CCMP1516).